The primary structure comprises 1251 residues: MRRGGWRKRAENDGWETWGGYMAAKVQKLEEQFRSDAAMQKDGTSSTIFSGVAIYVNGYTDPSAEELRKLMMLHGGQYHVYYSRSKTTHIIATNLPNAKIKELKGEKVIRPEWIVESIKAGRLLSYIPYQLYTKQSSVQKGLSFNPVCRPEDPLPGPSNIAKQLNNRVNHIVKKIETENEVKVNGMNSWNEEDENNDFSFVDLEQTSPGRKQNGIPHPRGSTAIFNGHTPSSNGALKTQDCLVPMVNSVASRLSPAFSQEEDKAEKSSTDFRDCTLQQLQQSTRNTDALRNPHRTNSFSLSPLHSNTKINGAHHSTVQGPSSTKSTSSVSTFSKAAPSVPSKPSDCNFISNFYSHSRLHHISMWKCELTEFVNTLQRQSNGIFPGREKLKKMKTGRSALVVTDTGDMSVLNSPRHQSCIMHVDMDCFFVSVGIRNRPDLKGKPVAVTSNRGTGRAPLRPGANPQLEWQYYQNKILKGKAADIPDSSLWENPDSAQANGIDSVLSRAEIASCSYEARQLGIKNGMFFGHAKQLCPNLQAVPYDFHAYKEVAQTLYETLASYTHNIEAVSCDEALVDITEILAETKLTPDEFANAVRMEIKDQTKCAASVGIGSNILLARMATRKAKPDGQYHLKPEEVDDFIRGQLVTNLPGVGHSMESKLASLGIKTCGDLQYMTMAKLQKEFGPKTGQMLYRFCRGLDDRPVRTEKERKSVSAEINYGIRFTQPKEAEAFLLSLSEEIQRRLEATGMKGKRLTLKIMVRKPGAPVETAKFGGHGICDNIARTVTLDQATDNAKIIGKAMLNMFHTMKLNISDMRGVGIHVNQLVPTNLNPSTCPSRPSVQSSHFPSGSYSVRDVFQVQKAKKSTEEEHKEVFRAAVDLEISSASRTCTFLPPFPAHLPTSPDTNKAESSGKWNGLHTPVSVQSRLNLSIEVPSPSQLDQSVLEALPPDLREQVEQVCAVQQAESHGDKKKEPVNGCNTGILPQPVGTVLLQIPEPQESNSDAGINLIALPAFSQVDPEVFAALPAELQRELKAAYDQRQRQGENSTHQQSASASVPKNPLLHLKAAVKEKKRNKKKKTIGSPKRIQSPLNNKLLNSPAKTLPGACGSPQKLIDGFLKHEGPPAEKPLEELSASTSGVPGLSSLQSDPAGCVRPPAPNLAGAVEFNDVKTLLREWITTISDPMEEDILQVVKYCTDLIEEKDLEKLDLVIKYMKRLMQQSVESVWNMAFDFILDNVQVVLQQTYGSTLKVT.

Residues 44–131 (TSSTIFSGVA…RLLSYIPYQL (88 aa)) enclose the BRCT domain. 2 disordered regions span residues 206–236 (TSPG…NGAL) and 282–342 (STRN…VPSK). Polar residues predominate over residues 282-320 (STRNTDALRNPHRTNSFSLSPLHSNTKINGAHHSTVQGP). A compositionally biased stretch (low complexity) spans 321–342 (SSTKSTSSVSTFSKAAPSVPSK). Positions 352–362 (FYSHSRLHHIS) are interaction with target DNA. Residues Arg-357, 423–427 (DMDCF), 510–516 (SCSYEAR), Asn-522, and Asp-570 each bind dCTP. The region spanning 419–653 (IMHVDMDCFF…QLVTNLPGVG (235 aa)) is the UmuC domain. Position 423 (Asp-423) interacts with Mg(2+). 2 residues coordinate Mg(2+): Asp-570 and Glu-571. 2 interaction with target DNA regions span residues 653–656 (GHSM) and 709–717 (RKSVSAEIN). Disordered stretches follow at residues 1035–1096 (AYDQ…KLLN) and 1119–1147 (HEGP…LQSD). Residues 1043–1056 (GENSTHQQSASASV) are compositionally biased toward polar residues. Residues 1070-1079 (EKKRNKKKKT) are compositionally biased toward basic residues. Residues 1071–1078 (KKRNKKKK) carry the Nuclear localization signal motif. The span at 1119 to 1129 (HEGPPAEKPLE) shows a compositional bias: basic and acidic residues. The segment covering 1132–1146 (SASTSGVPGLSSLQS) has biased composition (polar residues). The segment at 1150-1249 (GCVRPPAPNL…LQQTYGSTLK (100 aa)) is protein interaction domain; mediates interaction with DNA polymerase zeta.

This sequence belongs to the DNA polymerase type-Y family. In terms of assembly, monomer. Interacts with the DNA polymerase zeta which is composed of REV3L and MAD2L2; the interaction with MAD2L2 is direct and requires that REV3L is in its closed conformation. Interacts with POLH, POLI and POLK. May bind ITGA3. Interacts with FAAP20/C1orf86. Ubiquitous.

The protein localises to the nucleus. Functionally, deoxycytidyl transferase involved in DNA repair. Transfers a dCMP residue from dCTP to the 3'-end of a DNA primer in a template-dependent reaction. May assist in the first step in the bypass of abasic lesions by the insertion of a nucleotide opposite the lesion. Required for normal induction of mutations by physical and chemical agents. The polypeptide is DNA repair protein REV1 (REV1) (Homo sapiens (Human)).